The following is a 259-amino-acid chain: Ubiquinone biosynthesis protein COQ4 homolog, mitochondrial (259 aa).

Zn(2+) contacts are provided by H162, D163, H166, and E178.

The protein belongs to the COQ4 family. As to quaternary structure, component of a multi-subunit COQ enzyme complex. It depends on Zn(2+) as a cofactor.

The protein resides in the mitochondrion inner membrane. It carries out the reaction a 4-hydroxy-3-methoxy-5-(all-trans-polyprenyl)benzoate + H(+) = a 2-methoxy-6-(all-trans-polyprenyl)phenol + CO2. Its pathway is cofactor biosynthesis; ubiquinone biosynthesis. Functionally, lyase that catalyzes the C1-decarboxylation of 4-hydroxy-3-methoxy-5-(all-trans-polyprenyl)benzoic acid into 2-methoxy-6-(all-trans-polyprenyl)phenol during ubiquinone biosynthesis. The chain is Ubiquinone biosynthesis protein COQ4 homolog, mitochondrial from Bombyx mori (Silk moth).